A 296-amino-acid polypeptide reads, in one-letter code: Ribosomal protein L11 methyltransferase (296 aa).

S-adenosyl-L-methionine is bound by residues threonine 151, glycine 172, aspartate 194, and asparagine 233.

It belongs to the methyltransferase superfamily. PrmA family.

It localises to the cytoplasm. It catalyses the reaction L-lysyl-[protein] + 3 S-adenosyl-L-methionine = N(6),N(6),N(6)-trimethyl-L-lysyl-[protein] + 3 S-adenosyl-L-homocysteine + 3 H(+). In terms of biological role, methylates ribosomal protein L11. This chain is Ribosomal protein L11 methyltransferase, found in Thiobacillus denitrificans (strain ATCC 25259 / T1).